Consider the following 398-residue polypeptide: MKRLTILGSTGSVGKSTLTVVRNNPDKFKVTALAAGKNIQVMAEQCLEFRPQYAAMADEVSAKELRQLLIEQGCKTEVFFGEQAACDLAALNDVDQVMSGIVGVAGLLPTLAAIRAGKQILLANKESLITSGRFFMDAVAKHNAQLLPIDSEHNAIFQSLPEVIQRNLGRGDLKQYGIANIILTGSGGPFRHTPLEQLAFVTPDQACAHPNWSMGRKISVDSATMMNKGLEYIEACCLFNASAAEMEVVVHPQSVIHSMVRYQDGSVIAQLGTPDMCTPIAYAMAYPNRIASGVEPLDFYSLGTLTFSKPDYERYPCLKLAIEACHAGQAATTVLNAANEEIVKIFLQNGISFTDIAIINRQVVEKLNLSEPQSIEEVLQIDNLARDLAIKTIRSFIR.

Residues T10, G11, S12, V13, G36, K37, N38, and N124 each contribute to the NADPH site. K125 provides a ligand contact to 1-deoxy-D-xylulose 5-phosphate. E126 provides a ligand contact to NADPH. D150 serves as a coordination point for Mn(2+). 1-deoxy-D-xylulose 5-phosphate contacts are provided by S151, E152, S186, and H209. Residue E152 coordinates Mn(2+). G215 serves as a coordination point for NADPH. 4 residues coordinate 1-deoxy-D-xylulose 5-phosphate: S222, N227, K228, and E231. E231 is a Mn(2+) binding site.

It belongs to the DXR family. Homodimer. Mg(2+) serves as cofactor. It depends on Mn(2+) as a cofactor.

The catalysed reaction is 2-C-methyl-D-erythritol 4-phosphate + NADP(+) = 1-deoxy-D-xylulose 5-phosphate + NADPH + H(+). It functions in the pathway isoprenoid biosynthesis; isopentenyl diphosphate biosynthesis via DXP pathway; isopentenyl diphosphate from 1-deoxy-D-xylulose 5-phosphate: step 1/6. Its function is as follows. Catalyzes the NADPH-dependent rearrangement and reduction of 1-deoxy-D-xylulose-5-phosphate (DXP) to 2-C-methyl-D-erythritol 4-phosphate (MEP). The chain is 1-deoxy-D-xylulose 5-phosphate reductoisomerase from Photorhabdus laumondii subsp. laumondii (strain DSM 15139 / CIP 105565 / TT01) (Photorhabdus luminescens subsp. laumondii).